Here is a 549-residue protein sequence, read N- to C-terminus: Cell death protein 4 (549 aa).

The CARD domain occupies 1–91 (MLCEIECRAL…HLADFLEDYI (91 aa)). Positions 131, 162, 164, 165, 166, 167, 273, 367, and 369 each coordinate ATP. An NB-ARC domain is found at 133–417 (REYHVDRVIK…KLWSCVIPVD (285 aa)). Ser166 contributes to the Mg(2+) binding site.

In terms of assembly, associates as an asymmetric homodimer with ced-9. Only one ced-4 molecule within the dimer interacts directly with ced-9. Upon release from ced-9, forms a multimer, known as the apoptosome, and interacts with ced-3; the interaction results in ced-3 autoproteolytic cleavage and activation. Multiple oligomeric states of the apoptosome are observed including hexamers, heptamers and octamers. The hexamers likely represent a pre-mature state of the apoptosome and may contribute to the regulation of ced-3 activation. The apoptosome multimer also interacts with two processed ced-3 to form a stable holoenzyme. Interacts with sex-determining protein fem-1. May form a complex composed of ced-3, ced-4 and mac-1 or of ced-9, ced-4 and mac-1. Within the complex, interacts with mac-1.

It localises to the mitochondrion. The protein resides in the cytoplasm. It is found in the perinuclear region. Functionally, component of the egl-1, ced-9, ced-4 and ced-3 apoptotic signaling cascade required for the initiation of programmed cell death in cells fated to die during embryonic and postembryonic development. During oogenesis, required for germline apoptosis downstream of ced-9 and upstream of ced-3 but independently of egl-1. May regulate germline apoptosis in response to DNA damage, probably downstream of let-60/ras and mpk-1 pathway. Regulates CEP neuron apoptosis in response to high Al(3+) levels. During male tail morphogenesis, promotes apoptosis of the tail-spike cell upstream of ced-3 but independently of egl-1 and ced-9. May play a role in sex-specific cell apoptosis, probably by promoting ced-3-mediated cleavage of sex-determining protein fem-1. During larval development, required for the elimination of transient presynaptic components downstream of egl-1 and ced-9 and upstream of ced-3 apoptotic pathway. Downstream of calreticulin crt-1 and upstream of ced-3 and independently of egl-1 and ced-9, plays a role in the initial steps of axonal regrowth following axotomy. Together with ain-1, a component of the miRNA-induced-silencing complex (miRISC), and probably upstream of ced-3, regulates temporal cell fate patterning during larval development. May play a role in resistance to S.typhimurium-mediated infection. Plays a major role in programmed cell death. egl-1 binds to and directly inhibits the activity of ced-9, releasing the cell death activator ced-4 from a ced-9/ced-4-containing protein complex and allowing ced-4 to induce caspase ced-3 autoproteolytic cleavage and activation. Also forms a holoenzyme with processed ced-3 enhancing ced-3 activity. Its function is as follows. Prevents programmed cell death. This chain is Cell death protein 4 (ced-4), found in Caenorhabditis elegans.